A 229-amino-acid chain; its full sequence is MTTMAETQTWQTVLGEEKQEPYFQEILDFVKKERKAGKIIYPPQKDIFNALKLTPYEAVKVVILGQDPYHGPNQAHGLAFSVRPGVPAPPSLQNIFKELHADLGVSIPSHGFLEKWAKQGVLLLNAALTVEAGKPQSHANIEWHRFTDKVIESLNDHPEGIVFLLWGSYAQKKSQLITNLRHRILKAPHPSPLSAARGFLGCRHFSKANQLLHEMGRGEIDWALDEKVS.

Residue aspartate 67 is the Proton acceptor of the active site.

Belongs to the uracil-DNA glycosylase (UDG) superfamily. UNG family.

It localises to the cytoplasm. It catalyses the reaction Hydrolyzes single-stranded DNA or mismatched double-stranded DNA and polynucleotides, releasing free uracil.. In terms of biological role, excises uracil residues from the DNA which can arise as a result of misincorporation of dUMP residues by DNA polymerase or due to deamination of cytosine. This Coxiella burnetii (strain CbuG_Q212) (Coxiella burnetii (strain Q212)) protein is Uracil-DNA glycosylase.